Consider the following 122-residue polypeptide: Basic phospholipase A2 homolog (122 aa).

7 disulfides stabilise this stretch: C26-C116, C28-C44, C43-C96, C49-C122, C50-C89, C57-C82, and C75-C87. The interval 106–117 (KKHRVTVKFLCK) is important for membrane-damaging activities in eukaryotes and bacteria; heparin-binding.

The protein belongs to the phospholipase A2 family. Group II subfamily. K49 sub-subfamily. Homodimer; non-covalently linked. As to expression, expressed by the venom gland.

Its subcellular location is the secreted. In terms of biological role, snake venom phospholipase A2 (PLA2) that has almost no phospholipase A2 activity. Is myotoxic. Displays edema-inducing activities. A model of myotoxic mechanism has been proposed: an apo Lys49-PLA2 is activated by the entrance of a hydrophobic molecule (e.g. fatty acid) at the hydrophobic channel of the protein leading to a reorientation of a monomer. This reorientation causes a transition between 'inactive' to 'active' states, causing alignment of C-terminal and membrane-docking sites (MDoS) side-by-side and putting the membrane-disruption sites (MDiS) in the same plane, exposed to solvent and in a symmetric position for both monomers. The MDoS region stabilizes the toxin on membrane by the interaction of charged residues with phospholipid head groups. Subsequently, the MDiS region destabilizes the membrane with penetration of hydrophobic residues. This insertion causes a disorganization of the membrane, allowing an uncontrolled influx of ions (i.e. calcium and sodium), and eventually triggering irreversible intracellular alterations and cell death. In Protobothrops mucrosquamatus (Taiwan habu), this protein is Basic phospholipase A2 homolog.